Consider the following 285-residue polypeptide: 2-dehydro-3-deoxyphosphooctonate aldolase (285 aa).

Belongs to the KdsA family.

It is found in the cytoplasm. It carries out the reaction D-arabinose 5-phosphate + phosphoenolpyruvate + H2O = 3-deoxy-alpha-D-manno-2-octulosonate-8-phosphate + phosphate. The protein operates within carbohydrate biosynthesis; 3-deoxy-D-manno-octulosonate biosynthesis; 3-deoxy-D-manno-octulosonate from D-ribulose 5-phosphate: step 2/3. It functions in the pathway bacterial outer membrane biogenesis; lipopolysaccharide biosynthesis. The chain is 2-dehydro-3-deoxyphosphooctonate aldolase from Bordetella bronchiseptica (strain ATCC BAA-588 / NCTC 13252 / RB50) (Alcaligenes bronchisepticus).